The sequence spans 760 residues: ATP-dependent zinc metalloprotease FtsH (760 aa).

The Cytoplasmic portion of the chain corresponds to methionine 1–asparagine 5. A helical membrane pass occupies residues valine 6–phenylalanine 26. The Extracellular segment spans residues serine 27–serine 110. A helical membrane pass occupies residues isoleucine 111–methionine 131. The Cytoplasmic portion of the chain corresponds to phenylalanine 132 to glycine 760. Residue glycine 203–threonine 210 participates in ATP binding. A Zn(2+)-binding site is contributed by histidine 425. Glutamate 426 is a catalytic residue. Zn(2+) contacts are provided by histidine 429 and aspartate 501. The tract at residues aspartate 616 to glycine 760 is disordered. Over residues alanine 650 to alanine 669 the composition is skewed to low complexity. A compositionally biased stretch (acidic residues) spans glycine 740–aspartate 750.

This sequence in the central section; belongs to the AAA ATPase family. In the C-terminal section; belongs to the peptidase M41 family. In terms of assembly, homohexamer. Zn(2+) serves as cofactor.

It localises to the cell membrane. Acts as a processive, ATP-dependent zinc metallopeptidase for both cytoplasmic and membrane proteins. Plays a role in the quality control of integral membrane proteins. The chain is ATP-dependent zinc metalloprotease FtsH from Mycobacterium tuberculosis (strain CDC 1551 / Oshkosh).